The primary structure comprises 120 residues: Myohemerythrin (120 aa).

Fe cation contacts are provided by histidine 26, histidine 56, glutamate 60, histidine 75, histidine 79, histidine 108, and aspartate 113.

It belongs to the hemerythrin family. In terms of assembly, monomer.

The protein resides in the cytoplasm. Functionally, myohemerythrin is an oxygen-binding protein found in the retractor muscles of certain worms. The oxygen-binding site contains two iron atoms. In Theromyzon tessulatum (Duck leech), this protein is Myohemerythrin.